The chain runs to 256 residues: UPF0246 protein Sde_3824 (256 aa).

This sequence belongs to the UPF0246 family.

In Saccharophagus degradans (strain 2-40 / ATCC 43961 / DSM 17024), this protein is UPF0246 protein Sde_3824.